A 733-amino-acid chain; its full sequence is Non-secreted LysM effector LCP1 (733 aa).

The first 22 residues, 1–22 (MMRRPWLLSALVAWVKLPSVQG), serve as a signal peptide directing secretion. 2 LysM domains span residues 211 to 256 (SEYT…KLCI) and 261 to 309 (DVYV…TICI). 9 N-linked (GlcNAc...) asparagine glycosylation sites follow: Asn-298, Asn-304, Asn-340, Asn-350, Asn-381, Asn-432, Asn-442, Asn-455, and Asn-538. The region spanning 347-393 (LFHNVTAGDDCGTIGLKYSISLDDFIFLNSMIWPNCTNLWLRASYCV) is the LysM 3 domain. Residues 605–629 (SPITSSAPTSTTASSKTSSSAAQPT) show a composition bias toward low complexity. The interval 605–637 (SPITSSAPTSTTASSKTSSSAAQPTNVSTDGTC) is disordered. Residue Asn-630 is glycosylated (N-linked (GlcNAc...) asparagine). 2 consecutive Chitin-binding type-1 domains span residues 634–680 (DGTC…KCDA) and 688–733 (DGTC…GVCT). Disulfide bonds link Cys-637/Cys-654, Cys-645/Cys-660, Cys-653/Cys-667, Cys-671/Cys-678, Cys-691/Cys-708, Cys-699/Cys-714, Cys-707/Cys-721, and Cys-725/Cys-732.

Belongs to the secreted LysM effector family.

The protein resides in the secreted. It localises to the cell membrane. Its subcellular location is the vacuole. Functionally, secreted effector that enables the plant pathogenic fungus to manipulate host defenses for successful infection. Not involved in host recognition and penetration but suppresses host cell death and promotes fumonisin biosynthesis while the pathogen colonizes maize kernels. This chain is Non-secreted LysM effector LCP1, found in Gibberella moniliformis (strain M3125 / FGSC 7600) (Maize ear and stalk rot fungus).